The chain runs to 347 residues: S-adenosylmethionine:tRNA ribosyltransferase-isomerase (347 aa).

It belongs to the QueA family. In terms of assembly, monomer.

It is found in the cytoplasm. The enzyme catalyses 7-aminomethyl-7-carbaguanosine(34) in tRNA + S-adenosyl-L-methionine = epoxyqueuosine(34) in tRNA + adenine + L-methionine + 2 H(+). It participates in tRNA modification; tRNA-queuosine biosynthesis. Functionally, transfers and isomerizes the ribose moiety from AdoMet to the 7-aminomethyl group of 7-deazaguanine (preQ1-tRNA) to give epoxyqueuosine (oQ-tRNA). The polypeptide is S-adenosylmethionine:tRNA ribosyltransferase-isomerase (Xylella fastidiosa (strain M23)).